A 105-amino-acid chain; its full sequence is Translation initiation factor 1A 2 (105 aa).

The disordered stretch occupies residues M1 to P22. One can recognise an S1-like domain in the interval T17–T91.

It belongs to the eIF-1A family.

Functionally, seems to be required for maximal rate of protein biosynthesis. Enhances ribosome dissociation into subunits and stabilizes the binding of the initiator Met-tRNA(I) to 40 S ribosomal subunits. This Methanosarcina acetivorans (strain ATCC 35395 / DSM 2834 / JCM 12185 / C2A) protein is Translation initiation factor 1A 2 (eIF1A2).